A 265-amino-acid chain; its full sequence is Phosphate import ATP-binding protein PstB 2 (265 aa).

An ABC transporter domain is found at 13–260; that stretch reads FRTENLNVYY…PTKQATRDYV (248 aa). 45–52 contributes to the ATP binding site; the sequence is GPSGCGKS.

The protein belongs to the ABC transporter superfamily. Phosphate importer (TC 3.A.1.7) family. The complex is composed of two ATP-binding proteins (PstB), two transmembrane proteins (PstC and PstA) and a solute-binding protein (PstS).

It is found in the cell inner membrane. The catalysed reaction is phosphate(out) + ATP + H2O = ADP + 2 phosphate(in) + H(+). Functionally, part of the ABC transporter complex PstSACB involved in phosphate import. Responsible for energy coupling to the transport system. The protein is Phosphate import ATP-binding protein PstB 2 of Synechococcus sp. (strain JA-2-3B'a(2-13)) (Cyanobacteria bacterium Yellowstone B-Prime).